The following is a 291-amino-acid chain: Bis(5'-nucleosyl)-tetraphosphatase, symmetrical (291 aa).

Belongs to the Ap4A hydrolase family.

It catalyses the reaction P(1),P(4)-bis(5'-adenosyl) tetraphosphate + H2O = 2 ADP + 2 H(+). Functionally, hydrolyzes diadenosine 5',5'''-P1,P4-tetraphosphate to yield ADP. The protein is Bis(5'-nucleosyl)-tetraphosphatase, symmetrical of Coxiella burnetii (strain CbuG_Q212) (Coxiella burnetii (strain Q212)).